A 153-amino-acid polypeptide reads, in one-letter code: Virion assembly protein OPG100 (153 aa).

It belongs to the orthopoxvirus OPG100 family. Homodimer. Part of a complex composed of the kinase OPG054, OPG092, OPG114, OPG115, OPG142 and OPG157. Interacts with OPG175.

The protein resides in the virion. It localises to the host cytoplasm. Late protein which is a part of a large complex required for early virion morphogenesis. This complex participates in the formation of virosomes and the incorporation of virosomal contents into nascent immature virions. Plays a role in DNA packaging during immature virions (IV) formation. In Vaccinia virus (strain Western Reserve) (VACV), this protein is Virion assembly protein OPG100 (OPG100).